Here is a 254-residue protein sequence, read N- to C-terminus: Ribosomal RNA small subunit methyltransferase J (254 aa).

S-adenosyl-L-methionine-binding positions include 107 to 108 (RD), 123 to 124 (ER), and Asp174.

Belongs to the methyltransferase superfamily. RsmJ family.

The protein resides in the cytoplasm. It carries out the reaction guanosine(1516) in 16S rRNA + S-adenosyl-L-methionine = N(2)-methylguanosine(1516) in 16S rRNA + S-adenosyl-L-homocysteine + H(+). Functionally, specifically methylates the guanosine in position 1516 of 16S rRNA. The sequence is that of Ribosomal RNA small subunit methyltransferase J from Coxiella burnetii (strain CbuK_Q154) (Coxiella burnetii (strain Q154)).